The sequence spans 306 residues: Armadillo repeat-containing protein 10 (306 aa).

Residues 7–29 form a helical membrane-spanning segment; the sequence is VGWVAAGLVLGAGACYCIYRLTR. S43 is subject to Phosphoserine. Phosphothreonine is present on T48. One copy of the ARM repeat lies at 101–143; that stretch reads GGIPIVGNKINSLNQSIKEKALNALNNLSVNVENQTKIKIYVP.

Interacts with the DNA-binding domain of p53/TP53.

It is found in the endoplasmic reticulum membrane. It localises to the mitochondrion outer membrane. In terms of biological role, may play a role in cell survival and cell growth. May suppress the transcriptional activity of p53/TP53. The sequence is that of Armadillo repeat-containing protein 10 (Armc10) from Mus musculus (Mouse).